We begin with the raw amino-acid sequence, 366 residues long: Homoserine O-acetyltransferase (366 aa).

An AB hydrolase-1 domain is found at 47–349; sequence NAILICHALS…SGEGHDSFLL (303 aa). The Nucleophile role is filled by Ser-153. Arg-221 is a binding site for substrate. Active-site residues include Asp-311 and His-344. Substrate is bound at residue Asp-345.

Belongs to the AB hydrolase superfamily. MetX family. In terms of assembly, homodimer.

The protein localises to the cytoplasm. The enzyme catalyses L-homoserine + acetyl-CoA = O-acetyl-L-homoserine + CoA. The protein operates within amino-acid biosynthesis; L-methionine biosynthesis via de novo pathway; O-acetyl-L-homoserine from L-homoserine: step 1/1. Functionally, transfers an acetyl group from acetyl-CoA to L-homoserine, forming acetyl-L-homoserine. This Leptospira interrogans serogroup Icterohaemorrhagiae serovar copenhageni (strain Fiocruz L1-130) protein is Homoserine O-acetyltransferase.